The sequence spans 604 residues: MSGTANSRRKEVLRVPVIDLNRVSDEEQLLPVVRAILLQHDTFLLKNYANKAVLDALLAGLTTKDLPDTSQGFDANFTGTLPLEDDVWLEQYIFDTDPQLRFDRKCRNESLCSIYSRLFKLGLFFAQLCVKSVVSSAELQDCISTSHYATKLTRYFNDNGSTHDGADAGATVLPTGDDFQYLFERDYVTFLPTGVLTIFPCAKAIRYKPSTMATTDNSWVSIDEPDCLLFHTGTLLARWSQGMHTTSPLQIDPRANIVSLTIWPPLTTPISSKGEGTIANHLLEQQIKAFPKVAQQYYPRELSILRLQDAMKFVKELFTVCETVLSLNALSRSTGVPPELHVLLPQISSMMKRKIVQDDILKLLTIWSDAYVVELNSRGELTMNLPKRDNLTTLTNKSRTLAFVERAESWYQQVIASKDEIMTDVPAFKINKRRSSSNSKTVLSSKVQTKSSNANALNNSRYLANSKENFMYKEKMPDSQANLMDRLRERERRSAALLSQRQKRYQQFLAMKMTQVFDILFSLTRGQPYTETYLSSLIVDSLQDSNNPIGTKEASEILAGLQGILPMDISVHQVDGGLKVYRWNSLDKNRFSKLLQIHKSKQQD.

This sequence belongs to the Cdt1 family. Associates with the MCM2-7 complex. Interacts with MCM2, ORC1, ORC2 and ORC6.

It is found in the cytoplasm. The protein resides in the nucleus. DNA replication licensing factor, required for pre-replication complex assembly. Faithful duplication of the genetic material requires 'once per cell cycle' DNA replication initiation and elongation. Central to this control is the tightly regulated formation of prereplicative complexes (preRCs) at future origins of DNA replication. Required for the recruitment of the MCM2-7 helicase complex to the replication origins. This chain is Cell division cycle protein CDT1 (TAH11), found in Saccharomyces cerevisiae (strain ATCC 204508 / S288c) (Baker's yeast).